The primary structure comprises 236 residues: Biosynthetic peptidoglycan transglycosylase (236 aa).

The chain crosses the membrane as a helical span at residues 12–31 (ALLWFAAGSVLVVLVLRWVP).

The protein belongs to the glycosyltransferase 51 family.

The protein localises to the cell inner membrane. The catalysed reaction is [GlcNAc-(1-&gt;4)-Mur2Ac(oyl-L-Ala-gamma-D-Glu-L-Lys-D-Ala-D-Ala)](n)-di-trans,octa-cis-undecaprenyl diphosphate + beta-D-GlcNAc-(1-&gt;4)-Mur2Ac(oyl-L-Ala-gamma-D-Glu-L-Lys-D-Ala-D-Ala)-di-trans,octa-cis-undecaprenyl diphosphate = [GlcNAc-(1-&gt;4)-Mur2Ac(oyl-L-Ala-gamma-D-Glu-L-Lys-D-Ala-D-Ala)](n+1)-di-trans,octa-cis-undecaprenyl diphosphate + di-trans,octa-cis-undecaprenyl diphosphate + H(+). The protein operates within cell wall biogenesis; peptidoglycan biosynthesis. Peptidoglycan polymerase that catalyzes glycan chain elongation from lipid-linked precursors. In Pseudomonas savastanoi pv. phaseolicola (strain 1448A / Race 6) (Pseudomonas syringae pv. phaseolicola (strain 1448A / Race 6)), this protein is Biosynthetic peptidoglycan transglycosylase.